Consider the following 880-residue polypeptide: Interference hedgehog (880 aa).

An N-terminal signal peptide occupies residues 1-20; it reads MTLLTSSLLFFSLLTSRLEA. At 21-703 the chain is on the extracellular side; it reads IPVLEKSPAH…ETFNMSPMLT (683 aa). 4 Ig-like C2-type domains span residues 45–142, 132–234, 252–340, and 346–432; these read PGVR…IARL, PLVV…IQLT, PHLL…YIKV, and PQIV…LQVN. Intrachain disulfides connect C68-C126, C173-C220, C276-C324, and C367-C414. N-linked (GlcNAc...) asparagine glycosylation is found at N102 and N209. Positions 426-467 are disordered; the sequence is GTLLQVNPKQIQEPRESGGTHRPKPNQGSKQKQMYPPTPPNV. 2 consecutive Fibronectin type-III domains span residues 461-567 and 575-670; these read PPTP…LQPG and VPEL…TQRP. N-linked (GlcNAc...) asparagine glycosylation occurs at N466. Heparin is bound by residues R497, K501, K503, and R541. Residue N557 is glycosylated (N-linked (GlcNAc...) asparagine). The tract at residues 662–697 is disordered; the sequence is LKQGRTQRPKTSTTEEPTLQMGDRDTTTPSHNETFN. 2 stretches are compositionally biased toward polar residues: residues 665–678 and 688–697; these read GRTQ…TEEP and TTPSHNETFN. Residue N693 is glycosylated (N-linked (GlcNAc...) asparagine). Residues 704 to 724 traverse the membrane as a helical segment; the sequence is GTIGGGAVLILLLISTCLCVC. Over 725–880 the chain is Cytoplasmic; that stretch reads RRRSSRSRGN…SSGSLNSVGV (156 aa). Disordered stretches follow at residues 728–762 and 775–880; these read SSRS…QRQR and QQQQ…SVGV. 2 stretches are compositionally biased toward low complexity: residues 823–837 and 864–880; these read RAGG…NNNN and SSRS…SVGV.

Belongs to the immunoglobulin superfamily. IHOG family. Homodimer. Heterotetramer; 2 iHog chains bind 2 hh chains when facilitated by heparin, heparin is required to promote high-affinity interactions between hh and iHog.

The protein resides in the membrane. Its function is as follows. Mediates response to the active Hedgehog (Hh) protein signal in embryos, functioning upstream or at the level of patched (ptc). This Drosophila yakuba (Fruit fly) protein is Interference hedgehog.